The sequence spans 1992 residues: Fer-1-like protein 4 (1992 aa).

C2 domains are found at residues 1–97, 214–330, and 369–502; these read MALT…VLRE, PRGD…QKWA, and TSSD…AGFN. Residues 1–1952 lie on the Extracellular side of the membrane; it reads MALTVCVRHL…PLKTFIFFIW (1952 aa). Disordered stretches follow at residues 554–606, 661–686, and 691–710; these read RVEP…APEI, AGRQEEQSGQGSRADEGSESSTLEVQ, and SEDRGAGQEEQELLGTPAQW. The span at 559 to 569 shows a compositional bias: polar residues; that stretch reads PSQTTQRSGLS. A compositionally biased stretch (basic residues) spans 572 to 581; sequence TGKKKKKKEK. 2 consecutive C2 domains span residues 951-1078 and 1126-1250; these read PSSG…ELQF and ISGH…PQEE. Disordered stretches follow at residues 1245 to 1276 and 1322 to 1361; these read EDPQEEEETEEETRDLVPHGPQGEKSLPEAGT and FQGQPSSDDEMDEAGDADGTHLISGDREAQEQGETDSKVS. Acidic residues-rich tracts occupy residues 1247–1257 and 1328–1337; these read PQEEEETEEET and SDDEMDEAGD. 2 consecutive C2 domains span residues 1430–1549 and 1675–1824; these read SFSE…ANCG and VPAP…EHCS. Aspartate 1464, aspartate 1470, aspartate 1519, aspartate 1521, aspartate 1527, aspartate 1795, serine 1798, and aspartate 1801 together coordinate Ca(2+). The interval 1862–1885 is disordered; the sequence is EAREAQAGKKRKRKRRAGRPEDLE. The segment covering 1869 to 1878 has biased composition (basic residues); it reads GKKRKRKRRA. A helical transmembrane segment spans residues 1953–1973; the sequence is RRYWRILVLLLLALITIFLLL. At 1974 to 1992 the chain is on the cytoplasmic side; it reads VFYTIPGQISEVIFSPVHK.

Ca(2+) serves as cofactor.

It is found in the membrane. This chain is Fer-1-like protein 4 (Fer1l4), found in Mus musculus (Mouse).